The following is a 142-amino-acid chain: Transcriptional regulator MraZ (142 aa).

2 SpoVT-AbrB domains span residues 5–51 and 77–120; these read ASAL…PRPE and AMDV…DSQT.

It belongs to the MraZ family. In terms of assembly, forms oligomers.

The protein resides in the cytoplasm. It localises to the nucleoid. This chain is Transcriptional regulator MraZ, found in Burkholderia cenocepacia (strain HI2424).